We begin with the raw amino-acid sequence, 232 residues long: Phosphoadenosine 5'-phosphosulfate reductase (232 aa).

The active-site Nucleophile; cysteine thiosulfonate intermediate is Cys-228.

It belongs to the PAPS reductase family. CysH subfamily.

It localises to the cytoplasm. It carries out the reaction [thioredoxin]-disulfide + sulfite + adenosine 3',5'-bisphosphate + 2 H(+) = [thioredoxin]-dithiol + 3'-phosphoadenylyl sulfate. The protein operates within sulfur metabolism; hydrogen sulfide biosynthesis; sulfite from sulfate: step 3/3. Its function is as follows. Catalyzes the formation of sulfite from phosphoadenosine 5'-phosphosulfate (PAPS) using thioredoxin as an electron donor. This chain is Phosphoadenosine 5'-phosphosulfate reductase, found in Synechococcus sp. (strain ATCC 27144 / PCC 6301 / SAUG 1402/1) (Anacystis nidulans).